The following is a 392-amino-acid chain: L-rhamnonate dehydratase (392 aa).

Substrate is bound by residues H22 and R48. Positions 214, 240, and 268 each coordinate Mg(2+). H318 serves as the catalytic Proton acceptor. E338 is a binding site for substrate.

Belongs to the mandelate racemase/muconate lactonizing enzyme family. RhamD subfamily. As to quaternary structure, homooctamer; tetramer of dimers. Requires Mg(2+) as cofactor.

It carries out the reaction L-rhamnonate = 2-dehydro-3-deoxy-L-rhamnonate + H2O. Catalyzes the dehydration of L-rhamnonate to 2-keto-3-deoxy-L-rhamnonate (KDR). The chain is L-rhamnonate dehydratase from Burkholderia orbicola (strain MC0-3).